Consider the following 205-residue polypeptide: ESCRT-related protein CHMP1 (205 aa).

Coiled coils occupy residues 13–51 (DLKFTSKSLQRQARKCEKEEKEQKLKVKKAIEKGNMDGA) and 109–140 (GNLQKMSETMDNFERQFVNMEVQAEFMEGAMA).

It belongs to the SNF7 family.

The protein resides in the cytoplasm. It localises to the endosome membrane. In terms of biological role, involved in ESCRT-dependent multivesicular body (MVB) formation and sorting of endosomal cargo proteins into MVBs. This is ESCRT-related protein CHMP1 from Oryza sativa subsp. japonica (Rice).